We begin with the raw amino-acid sequence, 472 residues long: Aspartyl/glutamyl-tRNA(Asn/Gln) amidotransferase subunit B (472 aa).

It belongs to the GatB/GatE family. GatB subfamily. Heterotrimer of A, B and C subunits.

The catalysed reaction is L-glutamyl-tRNA(Gln) + L-glutamine + ATP + H2O = L-glutaminyl-tRNA(Gln) + L-glutamate + ADP + phosphate + H(+). It catalyses the reaction L-aspartyl-tRNA(Asn) + L-glutamine + ATP + H2O = L-asparaginyl-tRNA(Asn) + L-glutamate + ADP + phosphate + 2 H(+). Allows the formation of correctly charged Asn-tRNA(Asn) or Gln-tRNA(Gln) through the transamidation of misacylated Asp-tRNA(Asn) or Glu-tRNA(Gln) in organisms which lack either or both of asparaginyl-tRNA or glutaminyl-tRNA synthetases. The reaction takes place in the presence of glutamine and ATP through an activated phospho-Asp-tRNA(Asn) or phospho-Glu-tRNA(Gln). In Elusimicrobium minutum (strain Pei191), this protein is Aspartyl/glutamyl-tRNA(Asn/Gln) amidotransferase subunit B.